A 213-amino-acid polypeptide reads, in one-letter code: Membrane-spanning 4-domains subfamily A member 3 (213 aa).

Over 1-26 the chain is Cytoplasmic; it reads MKPEETGGSVYQPLDESRHVQRGVLQ. Residues 27 to 47 form a helical membrane-spanning segment; the sequence is ALGAIQILNGILILALGIFLV. The Extracellular portion of the chain corresponds to 48–58; the sequence is CLQHVSHHFRH. The helical transmembrane segment at 59 to 79 threads the bilayer; sequence FFFFTFYTGYPLWGAVFFISS. The Cytoplasmic portion of the chain corresponds to 80–97; it reads GSLTVAAGRNPTRMLMQN. The helical transmembrane segment at 98-118 threads the bilayer; the sequence is SFGINIASTTIAFVGTVFLSV. Topologically, residues 119 to 148 are extracellular; it reads HLAFNTQAFKGCQSSPSPDVCISLGSSSDG. A helical transmembrane segment spans residues 149 to 169; sequence LVSLMLILTLLELSVTISISA. The Cytoplasmic segment spans residues 170-213; that stretch reads MWCLGNVCGLREAITSPPNSVESGILPEGSDSENLNTQPQASEE. Residues 189 to 213 form a disordered region; it reads SVESGILPEGSDSENLNTQPQASEE. Residues 201 to 213 show a composition bias toward polar residues; that stretch reads SENLNTQPQASEE.

It belongs to the MS4A family. As to quaternary structure, interacts with CDKN3. Interacts with CDKN3-CDK2 complexes through its binding to CDKN3; this interaction facilitates dissociation of cyclin A from CDKN3-CDK2 complexes. In terms of tissue distribution, expressed at low levels only in specific immune tissues, such as, spleen, bone marrow and peripheral blood leukocytes.

The protein resides in the membrane. In terms of biological role, hematopoietic modulator for the G1-S cell cycle transition. Modulates the level of phosphorylation of cyclin-dependent kinase 2 (CDK2) through its direct binding to cyclin-dependent kinase inhibitor 3 (CDKN3/KAP). In Mus musculus (Mouse), this protein is Membrane-spanning 4-domains subfamily A member 3 (Ms4a3).